The following is a 102-amino-acid chain: ATP-dependent Clp protease adapter protein ClpS (102 aa).

It belongs to the ClpS family. In terms of assembly, binds to the N-terminal domain of the chaperone ClpA.

Its function is as follows. Involved in the modulation of the specificity of the ClpAP-mediated ATP-dependent protein degradation. The sequence is that of ATP-dependent Clp protease adapter protein ClpS from Shewanella piezotolerans (strain WP3 / JCM 13877).